A 331-amino-acid polypeptide reads, in one-letter code: Cytosolic arginine sensor for mTORC1 subunit 1 (331 aa).

Ser14 bears the Phosphoserine mark. 2 ACT domains span residues 72–137 and 259–320; these read AEAT…HTLA and GELW…DILQ. Residues 110–111, Gly273, 279–280, and 299–303 each bind L-arginine; these read SV, IV, and TFNFD.

This sequence belongs to the GATS family. Forms homodimers and heterodimers with CASTOR2. Interacts with the GATOR2 complex which is composed of MIOS, SEC13, SEH1L, WDR24 and WDR59; the interaction is negatively regulated by arginine. Interacts with TM4SF5; the interaction is positively regulated by leucine and is negatively regulated by arginine. Post-translationally, phosphorylation at Ser-14 by AKT1, promoting the interaction between CASTOR1 and RNF167. Ubiquitinated by RNF167 via 'Lys-29'-polyubiquitination, leading to its degradation, releasing the GATOR2 complex. Ubiquitination by RNF167 is promoted by phosphorylation at Ser-14 by AKT1.

It localises to the cytoplasm. The protein resides in the cytosol. Functionally, functions as an intracellular arginine sensor within the amino acid-sensing branch of the TORC1 signaling pathway. As a homodimer or a heterodimer with CASTOR2, binds and inhibits the GATOR subcomplex GATOR2 and thereby mTORC1. Binding of arginine to CASTOR1 allosterically disrupts the interaction of CASTOR1-containing dimers with GATOR2 which can in turn activate mTORC1 and the TORC1 signaling pathway. This is Cytosolic arginine sensor for mTORC1 subunit 1 from Mus musculus (Mouse).